The sequence spans 109 residues: UPF0122 protein ABC2295 (109 aa).

The protein belongs to the UPF0122 family.

In terms of biological role, might take part in the signal recognition particle (SRP) pathway. This is inferred from the conservation of its genetic proximity to ftsY/ffh. May be a regulatory protein. In Shouchella clausii (strain KSM-K16) (Alkalihalobacillus clausii), this protein is UPF0122 protein ABC2295.